The chain runs to 341 residues: NADH-quinone oxidoreductase subunit H (341 aa).

Helical transmembrane passes span 16 to 36 (LLII…AVAY), 86 to 106 (VVFV…WAVI), 119 to 139 (VGVL…IMAG), 165 to 185 (IGFI…SDVV), 191 to 211 (MWFI…GLAE), 254 to 274 (GAMT…LGWL), 276 to 296 (IPGL…FLWV), and 315 to 335 (VFLP…TAFG).

The protein belongs to the complex I subunit 1 family. NDH-1 is composed of 14 different subunits. Subunits NuoA, H, J, K, L, M, N constitute the membrane sector of the complex.

The protein resides in the cell inner membrane. It catalyses the reaction a quinone + NADH + 5 H(+)(in) = a quinol + NAD(+) + 4 H(+)(out). Functionally, NDH-1 shuttles electrons from NADH, via FMN and iron-sulfur (Fe-S) centers, to quinones in the respiratory chain. The immediate electron acceptor for the enzyme in this species is believed to be ubiquinone. Couples the redox reaction to proton translocation (for every two electrons transferred, four hydrogen ions are translocated across the cytoplasmic membrane), and thus conserves the redox energy in a proton gradient. This subunit may bind ubiquinone. This is NADH-quinone oxidoreductase subunit H from Paramagnetospirillum magneticum (strain ATCC 700264 / AMB-1) (Magnetospirillum magneticum).